Consider the following 189-residue polypeptide: 7-methyl-GTP pyrophosphatase (189 aa).

The Proton acceptor role is filled by Asp-71.

The protein belongs to the Maf family. YceF subfamily. A divalent metal cation serves as cofactor.

It localises to the cytoplasm. The enzyme catalyses N(7)-methyl-GTP + H2O = N(7)-methyl-GMP + diphosphate + H(+). Nucleoside triphosphate pyrophosphatase that hydrolyzes 7-methyl-GTP (m(7)GTP). May have a dual role in cell division arrest and in preventing the incorporation of modified nucleotides into cellular nucleic acids. The chain is 7-methyl-GTP pyrophosphatase from Bdellovibrio bacteriovorus (strain ATCC 15356 / DSM 50701 / NCIMB 9529 / HD100).